The primary structure comprises 584 residues: ATP-dependent lipid A-core flippase (584 aa).

Transmembrane regions (helical) follow at residues 15–35 (LLGY…SMAV), 63–83 (IMWV…AGFI), 153–173 (LGML…CLVV), 251–271 (TGVT…FAGL), and 277–297 (GLTA…FAPV). In terms of domain architecture, ABC transmembrane type-1 spans 27–309 (LLSMLSMAVA…ISSVSQAMQR (283 aa)). An ABC transporter domain is found at 341 to 576 (LSFDAVSFAY…GGLYARLHSL (236 aa)). 375-382 (GSSGSGKT) contributes to the ATP binding site.

The protein belongs to the ABC transporter superfamily. Lipid exporter (TC 3.A.1.106) family. Homodimer.

The protein resides in the cell inner membrane. The enzyme catalyses ATP + H2O + lipid A-core oligosaccharideSide 1 = ADP + phosphate + lipid A-core oligosaccharideSide 2.. Involved in lipopolysaccharide (LPS) biosynthesis. Translocates lipid A-core from the inner to the outer leaflet of the inner membrane. Transmembrane domains (TMD) form a pore in the inner membrane and the ATP-binding domain (NBD) is responsible for energy generation. The polypeptide is ATP-dependent lipid A-core flippase (Chromobacterium violaceum (strain ATCC 12472 / DSM 30191 / JCM 1249 / CCUG 213 / NBRC 12614 / NCIMB 9131 / NCTC 9757 / MK)).